A 243-amino-acid polypeptide reads, in one-letter code: ABC transporter arginine-binding protein 1 (243 aa).

Positions 1–19 are cleaved as a signal peptide; it reads MKKLVLAALLASFTFGASA.

This sequence belongs to the bacterial solute-binding protein 3 family. As to quaternary structure, the complex is composed of two ATP-binding proteins (ArtP), two transmembrane proteins (ArtM and ArtQ) and two solute-binding proteins (ArtJ and ArtI).

The protein localises to the periplasm. In terms of biological role, part of the ABC transporter complex ArtPIQMJ involved in arginine transport. Binds L-arginine with high affinity. The protein is ABC transporter arginine-binding protein 1 (artJ) of Escherichia coli (strain K12).